Consider the following 330-residue polypeptide: Clavaminate synthase-like protein At3g21360 (330 aa).

N-acetylalanine is present on A2. Residues H120, E122, and H313 each contribute to the Fe cation site.

The cofactor is Fe cation.

In Arabidopsis thaliana (Mouse-ear cress), this protein is Clavaminate synthase-like protein At3g21360.